Consider the following 335-residue polypeptide: Phosphate acyltransferase (335 aa).

This sequence belongs to the PlsX family. In terms of assembly, homodimer. Probably interacts with PlsY.

It localises to the cytoplasm. It catalyses the reaction a fatty acyl-[ACP] + phosphate = an acyl phosphate + holo-[ACP]. The protein operates within lipid metabolism; phospholipid metabolism. Its function is as follows. Catalyzes the reversible formation of acyl-phosphate (acyl-PO(4)) from acyl-[acyl-carrier-protein] (acyl-ACP). This enzyme utilizes acyl-ACP as fatty acyl donor, but not acyl-CoA. This is Phosphate acyltransferase from Alkaliphilus oremlandii (strain OhILAs) (Clostridium oremlandii (strain OhILAs)).